The sequence spans 345 residues: UDP-N-acetylenolpyruvoylglucosamine reductase (345 aa).

Residues 59-254 (VGGPAACLAR…RKATQPLGRP (196 aa)) form the FAD-binding PCMH-type domain. Residue arginine 209 is part of the active site. Cysteine 258 serves as the catalytic Proton donor. The active site involves glutamate 328.

This sequence belongs to the MurB family. It depends on FAD as a cofactor.

It localises to the cytoplasm. The catalysed reaction is UDP-N-acetyl-alpha-D-muramate + NADP(+) = UDP-N-acetyl-3-O-(1-carboxyvinyl)-alpha-D-glucosamine + NADPH + H(+). It functions in the pathway cell wall biogenesis; peptidoglycan biosynthesis. In terms of biological role, cell wall formation. In Syntrophobacter fumaroxidans (strain DSM 10017 / MPOB), this protein is UDP-N-acetylenolpyruvoylglucosamine reductase.